A 177-amino-acid chain; its full sequence is Adenylyl-sulfate kinase (177 aa).

12-19 (GLSGAGKT) is a binding site for ATP. S86 (phosphoserine intermediate) is an active-site residue.

Belongs to the APS kinase family.

It catalyses the reaction adenosine 5'-phosphosulfate + ATP = 3'-phosphoadenylyl sulfate + ADP + H(+). It participates in sulfur metabolism; hydrogen sulfide biosynthesis; sulfite from sulfate: step 2/3. Catalyzes the synthesis of activated sulfate. This chain is Adenylyl-sulfate kinase, found in Picosynechococcus sp. (strain ATCC 27264 / PCC 7002 / PR-6) (Agmenellum quadruplicatum).